The sequence spans 364 residues: Developmentally-regulated GTP-binding protein 2 (364 aa).

Residue Lys21 is modified to (3S)-3-hydroxylysine. In terms of domain architecture, OBG-type G spans 63–288; sequence ARVALIGFPS…LLEMLWEYLA (226 aa). GTP contacts are provided by residues 69 to 76, 94 to 98, 115 to 118, 246 to 249, and 269 to 271; these read GFPSVGKS, FTTLT, DLPG, NKID, and SCG. 2 residues coordinate Mg(2+): Ser76 and Thr96. One can recognise a TGS domain in the interval 288–363; the sequence is ALTCIYTKKR…EHEDVIQIVK (76 aa).

It belongs to the TRAFAC class OBG-HflX-like GTPase superfamily. OBG GTPase family. Interacts with RWDD1; this interaction confers protection to polyubiquitination and proteolytic degradation. Interacts with JMJD7; this interaction is direct. The cofactor is Mg(2+). Post-translationally, hydroxylated (with S stereochemistry) at C-3 of Lys-21 by JMJD7; this modification hinders trypsin-catalyzed proteolysis in vitro. In terms of processing, polyubiquitinated. As to expression, highest levels in skeletal muscle, heart and kidney. Low levels in colon, thymus, spleen, small intestine, lung and Leukocytes.

Its subcellular location is the nucleus. The protein localises to the cytoplasm. The enzyme catalyses GTP + H2O = GDP + phosphate + H(+). Functionally, catalyzes the conversion of GTP to GDP through hydrolysis of the gamma-phosphate bond in GTP. When hydroxylated at C-3 of 'Lys-21' by JMJD7, may bind to RNA and play a role in translation. The polypeptide is Developmentally-regulated GTP-binding protein 2 (Homo sapiens (Human)).